The chain runs to 385 residues: Zinc cluster transcription factor CZF1 (385 aa).

The segment covering 1–19 has biased composition (polar residues); it reads MSSIPNINWNDPNNGKSNT. Disordered stretches follow at residues 1-117, 154-216, and 233-308; these read MSSI…QQPL, LQQR…QQWD, and SSIQ…KPIT. Residues 20–38 are compositionally biased toward low complexity; that stretch reads SRQSQPQPQLPSNVSPPNS. 2 stretches are compositionally biased toward polar residues: residues 52–67 and 88–97; these read YGSS…NPNT and YPVQQTAQQR. Composition is skewed to low complexity over residues 102–117 and 154–169; these read LQQV…QQPL and LQQR…KSQL. A compositionally biased stretch (polar residues) spans 170 to 200; that stretch reads NEQNAMMSASTQQYPVQDFTNPYPNAQNPAE. Composition is skewed to low complexity over residues 201 to 214 and 233 to 256; these read QQQQ…QSQQ and SSIQ…KQQQ. Residues 265-275 show a composition bias toward basic residues; it reads KKKPGRKPKLR. A compositionally biased stretch (polar residues) spans 279 to 291; sequence ESSSETPQVPKTA. Positions 315–342 form a DNA-binding region, zn(2)-C6 fungal-type; the sequence is CLTCRQRKKRCCETRPRCTECTRLRLNC. Residues 345-364 are disordered; it reads PKPGTEHKNKPKDQKDDENT. A compositionally biased stretch (basic and acidic residues) spans 348–364; that stretch reads GTEHKNKPKDQKDDENT.

As to quaternary structure, interacts with EFG1.

The protein resides in the nucleus. Its function is as follows. Transcriptional regulator of the switch between 2 heritable states, the white and opaque states. These 2 cell types differ in many characteristics, including cell structure, mating competence, and virulence. Each state is heritable for many generations, and switching between states occurs stochastically, at low frequency. Contributes to formation of the opaque state, but is not necessary for heritability of the opaque state. Plays a role in cell adhesion and pseudohyphal growth. Involved in acquisition of drug resistance and acts as a repressor of beta-glucan synthesis, thus negatively regulating cell wall integrity. Plays a role in adherence, invasion and damage to oral epithelial cells. This is Zinc cluster transcription factor CZF1 (CZF1) from Candida albicans (strain SC5314 / ATCC MYA-2876) (Yeast).